We begin with the raw amino-acid sequence, 123 residues long: Large ribosomal subunit protein bL17 (123 aa).

This sequence belongs to the bacterial ribosomal protein bL17 family. In terms of assembly, part of the 50S ribosomal subunit. Contacts protein L32.

The chain is Large ribosomal subunit protein bL17 from Staphylococcus haemolyticus (strain JCSC1435).